A 164-amino-acid polypeptide reads, in one-letter code: UPF0114 protein YqhA (164 aa).

Helical transmembrane passes span 15 to 35 (LLAP…LKFF), 53 to 73 (LILV…LVMV), and 136 to 156 (LMWY…MGYL).

This sequence belongs to the UPF0114 family.

Its subcellular location is the cell membrane. The sequence is that of UPF0114 protein YqhA from Salmonella dublin (strain CT_02021853).